Here is a 215-residue protein sequence, read N- to C-terminus: UPF0502 protein Shal_1801 (215 aa).

The protein belongs to the UPF0502 family.

The polypeptide is UPF0502 protein Shal_1801 (Shewanella halifaxensis (strain HAW-EB4)).